We begin with the raw amino-acid sequence, 812 residues long: Probable inorganic carbon transporter subunit DabA (812 aa).

Cysteine 339, aspartate 341, histidine 501, and cysteine 516 together coordinate Zn(2+).

Belongs to the inorganic carbon transporter (TC 9.A.2) DabA family. In terms of assembly, forms a complex with DabB. The cofactor is Zn(2+).

The protein resides in the cell inner membrane. Its function is as follows. Part of an energy-coupled inorganic carbon pump. The chain is Probable inorganic carbon transporter subunit DabA from Xanthomonas axonopodis pv. citri (strain 306).